The primary structure comprises 126 residues: Small ribosomal subunit protein uS12m (126 aa).

2 disordered regions span residues 1 to 27 (MPTM…LNKC) and 106 to 126 (GIPG…KDYI). 2 stretches are compositionally biased toward basic residues: residues 12 to 23 (RESKRRTKRTRA) and 109 to 120 (GRRRGRSKYGTK).

This sequence belongs to the universal ribosomal protein uS12 family.

The protein resides in the mitochondrion. In terms of biological role, protein S12 is involved in the translation initiation step. The sequence is that of Small ribosomal subunit protein uS12m (RPS12) from Marchantia polymorpha (Common liverwort).